Reading from the N-terminus, the 158-residue chain is Large ribosomal subunit protein uL23 (158 aa).

The disordered stretch occupies residues 1 to 43 (MPPKSSTKAEPKASSAKTQVAKAKSAKKAVVKGTSSKTQRRIR). Residues 12–23 (KASSAKTQVAKA) are compositionally biased toward low complexity.

This sequence belongs to the universal ribosomal protein uL23 family.

In terms of biological role, this protein binds to a specific region on the 26S rRNA. This Puccinia graminis (Black stem rust fungus) protein is Large ribosomal subunit protein uL23.